Here is a 159-residue protein sequence, read N- to C-terminus: MSSILSSNFTNKSNQLVNESAVDSSLTASPCSTQPGDVGWCFDAPHGVLTKLPNETRAIVSAVSPNWRVTSIGEKTLAIMIPHDQPVLGISKKNFVDLLEFAEDKLEMERVLAVFEKARINPTEGFPRTLRYVGFRPYAIDEHPVHLPAEKYFIMSYKV.

It belongs to the ODC antizyme family. As to quaternary structure, interacts with ODC1 and thereby sterically blocks ODC homodimerization.

Ornithine decarboxylase (ODC) antizyme protein that negatively regulates ODC activity and intracellular polyamine biosynthesis and uptake in response to increased intracellular polyamine levels. Binds to ODC monomers, inhibiting the assembly of the functional ODC homodimer, and targets the monomers for ubiquitin-independent proteolytic destruction by the 26S proteasome. The sequence is that of Ornithine decarboxylase antizyme from Caenorhabditis elegans.